A 180-amino-acid chain; its full sequence is NADH-quinone oxidoreductase subunit I (180 aa).

2 4Fe-4S ferredoxin-type domains span residues 50–80 (LTRDPDGEERCVACNLCAVACPVGCISLQKA) and 90–119 (EFFRINFSRCIFCGLCEEACPTTAIQLTPD). 8 residues coordinate [4Fe-4S] cluster: cysteine 60, cysteine 63, cysteine 66, cysteine 70, cysteine 99, cysteine 102, cysteine 105, and cysteine 109.

It belongs to the complex I 23 kDa subunit family. In terms of assembly, NDH-1 is composed of 13 different subunits. Subunits NuoA, H, J, K, L, M, N constitute the membrane sector of the complex. It depends on [4Fe-4S] cluster as a cofactor.

The protein localises to the cell inner membrane. The catalysed reaction is a quinone + NADH + 5 H(+)(in) = a quinol + NAD(+) + 4 H(+)(out). Its function is as follows. NDH-1 shuttles electrons from NADH, via FMN and iron-sulfur (Fe-S) centers, to quinones in the respiratory chain. The immediate electron acceptor for the enzyme in this species is believed to be ubiquinone. Couples the redox reaction to proton translocation (for every two electrons transferred, four hydrogen ions are translocated across the cytoplasmic membrane), and thus conserves the redox energy in a proton gradient. The polypeptide is NADH-quinone oxidoreductase subunit I (Yersinia pseudotuberculosis serotype O:1b (strain IP 31758)).